Reading from the N-terminus, the 253-residue chain is 4-phosphopantoate--beta-alanine ligase (253 aa).

Residues Arg-17, Arg-39, 179–181 (DLN), 185–186 (RT), and 197–198 (NL) each bind ATP.

The protein belongs to the archaeal phosphopantothenate synthetase family. In terms of assembly, homodimer.

It carries out the reaction (R)-4-phosphopantoate + beta-alanine + ATP = (R)-4'-phosphopantothenate + AMP + diphosphate + H(+). It functions in the pathway cofactor biosynthesis; coenzyme A biosynthesis. Catalyzes the condensation of (R)-4-phosphopantoate and beta-alanine to 4'-phosphopantothenate in the CoA biosynthesis pathway. The sequence is that of 4-phosphopantoate--beta-alanine ligase from Methanosarcina mazei (strain ATCC BAA-159 / DSM 3647 / Goe1 / Go1 / JCM 11833 / OCM 88) (Methanosarcina frisia).